The chain runs to 597 residues: Proline--tRNA ligase (597 aa).

It belongs to the class-II aminoacyl-tRNA synthetase family. ProS type 1 subfamily. In terms of assembly, homodimer.

The protein localises to the cytoplasm. The enzyme catalyses tRNA(Pro) + L-proline + ATP = L-prolyl-tRNA(Pro) + AMP + diphosphate. Catalyzes the attachment of proline to tRNA(Pro) in a two-step reaction: proline is first activated by ATP to form Pro-AMP and then transferred to the acceptor end of tRNA(Pro). As ProRS can inadvertently accommodate and process non-cognate amino acids such as alanine and cysteine, to avoid such errors it has two additional distinct editing activities against alanine. One activity is designated as 'pretransfer' editing and involves the tRNA(Pro)-independent hydrolysis of activated Ala-AMP. The other activity is designated 'posttransfer' editing and involves deacylation of mischarged Ala-tRNA(Pro). The misacylated Cys-tRNA(Pro) is not edited by ProRS. The sequence is that of Proline--tRNA ligase from Bifidobacterium longum (strain NCC 2705).